We begin with the raw amino-acid sequence, 417 residues long: Serine hydroxymethyltransferase 1 (417 aa).

(6S)-5,6,7,8-tetrahydrofolate is bound by residues Leu121 and 125 to 127; that span reads GHL. An N6-(pyridoxal phosphate)lysine modification is found at Lys230. (6S)-5,6,7,8-tetrahydrofolate is bound at residue 355-357; sequence SPF.

Belongs to the SHMT family. As to quaternary structure, homodimer. Pyridoxal 5'-phosphate is required as a cofactor.

It is found in the cytoplasm. The enzyme catalyses (6R)-5,10-methylene-5,6,7,8-tetrahydrofolate + glycine + H2O = (6S)-5,6,7,8-tetrahydrofolate + L-serine. The protein operates within one-carbon metabolism; tetrahydrofolate interconversion. It functions in the pathway amino-acid biosynthesis; glycine biosynthesis; glycine from L-serine: step 1/1. Catalyzes the reversible interconversion of serine and glycine with tetrahydrofolate (THF) serving as the one-carbon carrier. This reaction serves as the major source of one-carbon groups required for the biosynthesis of purines, thymidylate, methionine, and other important biomolecules. Also exhibits THF-independent aldolase activity toward beta-hydroxyamino acids, producing glycine and aldehydes, via a retro-aldol mechanism. The sequence is that of Serine hydroxymethyltransferase 1 from Pseudomonas aeruginosa (strain ATCC 15692 / DSM 22644 / CIP 104116 / JCM 14847 / LMG 12228 / 1C / PRS 101 / PAO1).